Reading from the N-terminus, the 59-residue chain is Anti-inflammatory peptide amregulin (59 aa).

Positions 1 to 19 are cleaved as a signal peptide; it reads MKLHMLNMLNCLLLTVCDG.

In terms of tissue distribution, salivary glands.

The protein resides in the secreted. In terms of biological role, anti-inflammatory peptide that may facilitate successful blood feeding of ticks and may lead to immunotolerance in its host. Inhibits the secretion of inflammatory factors in rat splenocytes, such as tumor necrosis factor-alpha (TNF), interleukin-1, interleukin-8 (CXCL8) and interferon-gamma (IFNG). In addition, shows strong free radical scavenging and antioxidant activities in vitro. In vivo, inhibits adjuvant-induced paw inflammation in mouse models. The polypeptide is Anti-inflammatory peptide amregulin (Amblyomma variegatum (Tropical bont tick)).